The sequence spans 218 residues: Small ribosomal subunit protein uS3 (218 aa).

The KH type-2 domain maps to I38–K106.

It belongs to the universal ribosomal protein uS3 family. As to quaternary structure, part of the 30S ribosomal subunit. Forms a tight complex with proteins S10 and S14.

Functionally, binds the lower part of the 30S subunit head. Binds mRNA in the 70S ribosome, positioning it for translation. The protein is Small ribosomal subunit protein uS3 of Anoxybacillus flavithermus (strain DSM 21510 / WK1).